The following is a 382-amino-acid chain: Exostosin-1 homolog (382 aa).

An N-terminal signal peptide occupies residues 1-20; that stretch reads MQNVMKFHLVIFMLFGSVRL. N-linked (GlcNAc...) asparagine glycosylation occurs at Asn-268.

This sequence belongs to the glycosyltransferase 47 family. As to quaternary structure, interacts with rib-2.

It is found in the endoplasmic reticulum. It localises to the golgi apparatus. Required for the biosynthesis of heparan sulfate by positively regulating N-acetylglucosamine transferase II (GlcNAcT-II) and glucuronyl transferase II (GlcAT-II) activities of glycosyltransferase rib-2. Probably not directly involved in chondroitin sulfate biosynthesis but negatively regulates chondroitin sulfate levels. Maternally required for normal ventral epidermal enclosure and for embryo elongation during the early stages of embryonic development. In addition, involved in the elongation of the pharyngeal isthmus and in the organization of the actin cytoskeleton in the pharyngeal muscles during the later stages embryonic development. In adults, regulates egg-laying and the normal morphogenesis of the vulva. Also involved in the directed migration of hermaphrodite-specific neurons. The polypeptide is Exostosin-1 homolog (rib-1) (Caenorhabditis elegans).